A 488-amino-acid chain; its full sequence is Ribulose bisphosphate carboxylase large chain (488 aa).

Substrate contacts are provided by asparagine 127 and threonine 177. Lysine 179 serves as the catalytic Proton acceptor. Lysine 181 contacts substrate. 3 residues coordinate Mg(2+): lysine 205, aspartate 207, and glutamate 208. An N6-carboxylysine modification is found at lysine 205. Histidine 297 acts as the Proton acceptor in catalysis. Residues arginine 298, histidine 330, and serine 382 each coordinate substrate.

It belongs to the RuBisCO large chain family. Type I subfamily. As to quaternary structure, heterohexadecamer of 8 large chains and 8 small chains. The cofactor is Mg(2+).

It localises to the plastid. The protein localises to the chloroplast. It carries out the reaction 2 (2R)-3-phosphoglycerate + 2 H(+) = D-ribulose 1,5-bisphosphate + CO2 + H2O. It catalyses the reaction D-ribulose 1,5-bisphosphate + O2 = 2-phosphoglycolate + (2R)-3-phosphoglycerate + 2 H(+). In terms of biological role, ruBisCO catalyzes two reactions: the carboxylation of D-ribulose 1,5-bisphosphate, the primary event in carbon dioxide fixation, as well as the oxidative fragmentation of the pentose substrate in the photorespiration process. Both reactions occur simultaneously and in competition at the same active site. The sequence is that of Ribulose bisphosphate carboxylase large chain (rbcL) from Porphyra umbilicalis (Purple laver).